A 401-amino-acid chain; its full sequence is Acetate kinase (401 aa).

Asn7 is a Mg(2+) binding site. Lys14 serves as a coordination point for ATP. Residue Arg96 participates in substrate binding. Residue Asp153 is the Proton donor/acceptor of the active site. ATP contacts are provided by residues 212 to 216 (HLGNG), 287 to 289 (DMR), and 335 to 339 (GIGEN). Position 388 (Glu388) interacts with Mg(2+).

It belongs to the acetokinase family. Homodimer. Mg(2+) is required as a cofactor. It depends on Mn(2+) as a cofactor.

It localises to the cytoplasm. It carries out the reaction acetate + ATP = acetyl phosphate + ADP. Its pathway is metabolic intermediate biosynthesis; acetyl-CoA biosynthesis; acetyl-CoA from acetate: step 1/2. Its function is as follows. Catalyzes the formation of acetyl phosphate from acetate and ATP. Can also catalyze the reverse reaction. The polypeptide is Acetate kinase (Microcystis aeruginosa (strain NIES-843 / IAM M-2473)).